Consider the following 253-residue polypeptide: MEDEIRKAAEILAKSKHAVVFTGAGISAESGIPTFRGEDGLWRKYDPEEVASISGFKRNPRAFWEFSMEMKDKLFAEPNPAHYAIAELERMGIVKAVITQNIDMLHQRAGSRRVLELHGSMDKLDCLDCHETYDWSEFVEDFNKGEIPRCRKCGSYYVKPRVVLFGEPLPQRTLFEAIEEAKHCDAFMVVGSSLVVYPAAELPYIAKKAGAKMIIVNAEPTMADPIFDVKIIGKAGEVLPKIVEEVKRLRSEK.

The 252-residue stretch at 1 to 252 folds into the Deacetylase sirtuin-type domain; sequence MEDEIRKAAE…VEEVKRLRSE (252 aa). Residues 23 to 42 and 100 to 103 each bind NAD(+); these read GAGI…DGLW and QNID. H118 functions as the Proton acceptor in the catalytic mechanism. Residues C126, C129, C150, and C153 each contribute to the Zn(2+) site. NAD(+) contacts are provided by residues 191–193, 217–219, and A235; these read GSS and NAE.

The protein belongs to the sirtuin family. Class III subfamily. It depends on Zn(2+) as a cofactor.

It is found in the cytoplasm. It carries out the reaction N(6)-acetyl-L-lysyl-[protein] + NAD(+) + H2O = 2''-O-acetyl-ADP-D-ribose + nicotinamide + L-lysyl-[protein]. Functionally, NAD-dependent protein deacetylase which modulates the activities of several proteins which are inactive in their acetylated form. Deacetylates the N-terminal lysine residue of Alba, the major archaeal chromatin protein and that, in turn, increases Alba's DNA binding affinity, thereby repressing transcription. The polypeptide is NAD-dependent protein deacylase 2 (Archaeoglobus fulgidus (strain ATCC 49558 / DSM 4304 / JCM 9628 / NBRC 100126 / VC-16)).